We begin with the raw amino-acid sequence, 58 residues long: uncharacterized protein (58 aa).

The protein to A.fulgidus AF2407.1.

This is an uncharacterized protein from Pyrococcus abyssi (strain GE5 / Orsay).